A 31-amino-acid chain; its full sequence is Cytochrome b6-f complex subunit 6 (31 aa).

Residues 4–24 (ITSFFGFLLAALTITSVLFIG) traverse the membrane as a helical segment.

It belongs to the PetL family. In terms of assembly, the 4 large subunits of the cytochrome b6-f complex are cytochrome b6, subunit IV (17 kDa polypeptide, PetD), cytochrome f and the Rieske protein, while the 4 small subunits are PetG, PetL, PetM and PetN. The complex functions as a dimer.

The protein localises to the plastid. The protein resides in the chloroplast thylakoid membrane. Its function is as follows. Component of the cytochrome b6-f complex, which mediates electron transfer between photosystem II (PSII) and photosystem I (PSI), cyclic electron flow around PSI, and state transitions. PetL is important for photoautotrophic growth as well as for electron transfer efficiency and stability of the cytochrome b6-f complex. In Oenothera elata subsp. hookeri (Hooker's evening primrose), this protein is Cytochrome b6-f complex subunit 6.